Reading from the N-terminus, the 87-residue chain is Defensin-like protein 100 (87 aa).

A signal peptide spans 1 to 29 (MRSLRLRTVVVATIVVCLSVLLSPTEVDG). 4 disulfide bridges follow: Cys31-Cys79, Cys38-Cys64, Cys44-Cys76, and Cys48-Cys78.

This sequence belongs to the DEFL family.

Its subcellular location is the secreted. This is Defensin-like protein 100 from Arabidopsis thaliana (Mouse-ear cress).